Consider the following 175-residue polypeptide: Shikimate kinase (175 aa).

An ATP-binding site is contributed by 12–19 (GGRASGKS).

It belongs to the shikimate kinase family.

It localises to the cytoplasm. It carries out the reaction shikimate + ATP = 3-phosphoshikimate + ADP + H(+). It participates in metabolic intermediate biosynthesis; chorismate biosynthesis; chorismate from D-erythrose 4-phosphate and phosphoenolpyruvate: step 5/7. The chain is Shikimate kinase from Nitratidesulfovibrio vulgaris (strain ATCC 29579 / DSM 644 / CCUG 34227 / NCIMB 8303 / VKM B-1760 / Hildenborough) (Desulfovibrio vulgaris).